The sequence spans 494 residues: Cytochrome P450 2A4 (494 aa).

Residue S131 is modified to Phosphoserine. K379 carries the N6-acetyllysine modification. Residue C439 participates in heme binding.

Belongs to the cytochrome P450 family. Heme serves as cofactor. As to expression, kidney and lung. Expressed in liver, with a strong circadian rhythmicity. Circadian expression is regulated by DBP.

Its subcellular location is the endoplasmic reticulum membrane. The protein localises to the microsome membrane. The enzyme catalyses an organic molecule + reduced [NADPH--hemoprotein reductase] + O2 = an alcohol + oxidized [NADPH--hemoprotein reductase] + H2O + H(+). Functionally, highly active in the 15-alpha-hydroxylation of testosterone. Also active in the 15-alpha-hydroxylation of progesterone and androstenedione. Little or no activity on corticosterone, pregnenolone, dehydroepiandrosterone, estradiol or estriol. In Mus musculus (Mouse), this protein is Cytochrome P450 2A4 (Cyp2a4).